We begin with the raw amino-acid sequence, 390 residues long: LL-diaminopimelate aminotransferase 2 (390 aa).

2 residues coordinate substrate: Y13 and G38. Pyridoxal 5'-phosphate-binding positions include Y67, 102 to 103 (SK), Y127, N177, Y208, and 236 to 238 (SLS). K103, Y127, and N177 together coordinate substrate. K239 bears the N6-(pyridoxal phosphate)lysine mark. R247 provides a ligand contact to pyridoxal 5'-phosphate. R365 contacts substrate.

The protein belongs to the class-I pyridoxal-phosphate-dependent aminotransferase family. LL-diaminopimelate aminotransferase subfamily. In terms of assembly, homodimer. The cofactor is pyridoxal 5'-phosphate.

It catalyses the reaction (2S,6S)-2,6-diaminopimelate + 2-oxoglutarate = (S)-2,3,4,5-tetrahydrodipicolinate + L-glutamate + H2O + H(+). The protein operates within amino-acid biosynthesis; L-lysine biosynthesis via DAP pathway; LL-2,6-diaminopimelate from (S)-tetrahydrodipicolinate (aminotransferase route): step 1/1. Functionally, involved in the synthesis of meso-diaminopimelate (m-DAP or DL-DAP), required for both lysine and peptidoglycan biosynthesis. Catalyzes the direct conversion of tetrahydrodipicolinate to LL-diaminopimelate. The polypeptide is LL-diaminopimelate aminotransferase 2 (Nostoc sp. (strain PCC 7120 / SAG 25.82 / UTEX 2576)).